The primary structure comprises 616 residues: Sialic acid TRAP transporter permease protein SiaT (616 aa).

The tract at residues 1-190 (MKYINKLEEW…RISNYIKLGS (190 aa)) is TRAP transporter small permease. Helical transmembrane passes span 9-29 (EWLG…QILS), 36-56 (PLIW…MLGI), 83-103 (TNTF…HFGI), 117-137 (GGIS…LMMF), 153-173 (YLPA…LFFA), 195-215 (IALL…WSLF), 244-264 (FPLL…TGGI), 288-308 (IGAS…AGGL), 332-352 (ASCI…YGVI), 357-377 (IAKL…ALMA), 407-427 (FWAI…LFSP), 431-451 (AIVA…ELTL), 459-479 (IEAM…TFFG), 505-525 (VLVM…ALAL), 527-547 (FLVL…LIFF), 552-572 (TLNM…FVVA), and 587-607 (LPFL…PQII). Residues 191-616 (SSVYIALLVW…ITFVPNLLIP (426 aa)) form a TRAP transporter large permease region.

This sequence in the N-terminal section; belongs to the TRAP transporter small permease family. It in the C-terminal section; belongs to the TRAP transporter large permease family. In terms of assembly, the complex comprises the extracytoplasmic solute receptor protein SiaP, and the fused transmembrane protein SiaT.

Its subcellular location is the cell inner membrane. Functionally, part of the tripartite ATP-independent periplasmic (TRAP) transport system SiaPT involved in the uptake of sialic acid. This is Sialic acid TRAP transporter permease protein SiaT (siaT) from Haemophilus influenzae (strain 86-028NP).